Reading from the N-terminus, the 163-residue chain is ADP-ribosylation factor-like protein 2-binding protein (163 aa).

It belongs to the ARL2BP family. In terms of assembly, interacts with GTP bound ARL2 and ARL3; the complex ARL2-ARL2BP as well as ARL2BP alone, binds to SLC25A4/ANT1. Interaction with ARL2 may be required for cilia basal body localization. Interacts with STAT3; interaction is enhanced with ARL2. Found in a complex with ARL2BP, ARL2 and SLC25A6. Found in a complex with ARL2, ARL2BP and SLC25A4. Interacts with STAT2, STAT3 and STAT4.

The protein localises to the cytoplasm. It localises to the mitochondrion intermembrane space. The protein resides in the cytoskeleton. Its subcellular location is the microtubule organizing center. It is found in the centrosome. The protein localises to the nucleus. It localises to the spindle. The protein resides in the cilium basal body. Its function is as follows. Together with ARL2, plays a role in the nuclear translocation, retention and transcriptional activity of STAT3. May play a role as an effector of ARL2. This is ADP-ribosylation factor-like protein 2-binding protein (ARL2BP) from Pongo abelii (Sumatran orangutan).